The following is a 245-amino-acid chain: 1-(5-phosphoribosyl)-5-[(5-phosphoribosylamino)methylideneamino] imidazole-4-carboxamide isomerase (245 aa).

D8 functions as the Proton acceptor in the catalytic mechanism. D129 (proton donor) is an active-site residue.

The protein belongs to the HisA/HisF family.

It is found in the cytoplasm. The catalysed reaction is 1-(5-phospho-beta-D-ribosyl)-5-[(5-phospho-beta-D-ribosylamino)methylideneamino]imidazole-4-carboxamide = 5-[(5-phospho-1-deoxy-D-ribulos-1-ylimino)methylamino]-1-(5-phospho-beta-D-ribosyl)imidazole-4-carboxamide. It participates in amino-acid biosynthesis; L-histidine biosynthesis; L-histidine from 5-phospho-alpha-D-ribose 1-diphosphate: step 4/9. The protein is 1-(5-phosphoribosyl)-5-[(5-phosphoribosylamino)methylideneamino] imidazole-4-carboxamide isomerase of Rhodopseudomonas palustris (strain BisA53).